The following is a 257-amino-acid chain: 1-(5-phosphoribosyl)-5-[(5-phosphoribosylamino)methylideneamino] imidazole-4-carboxamide isomerase (257 aa).

Asp-8 functions as the Proton acceptor in the catalytic mechanism. Asp-129 serves as the catalytic Proton donor.

The protein belongs to the HisA/HisF family.

It localises to the cytoplasm. It catalyses the reaction 1-(5-phospho-beta-D-ribosyl)-5-[(5-phospho-beta-D-ribosylamino)methylideneamino]imidazole-4-carboxamide = 5-[(5-phospho-1-deoxy-D-ribulos-1-ylimino)methylamino]-1-(5-phospho-beta-D-ribosyl)imidazole-4-carboxamide. Its pathway is amino-acid biosynthesis; L-histidine biosynthesis; L-histidine from 5-phospho-alpha-D-ribose 1-diphosphate: step 4/9. In Thermosynechococcus vestitus (strain NIES-2133 / IAM M-273 / BP-1), this protein is 1-(5-phosphoribosyl)-5-[(5-phosphoribosylamino)methylideneamino] imidazole-4-carboxamide isomerase.